The primary structure comprises 443 residues: Thymidine phosphorylase (443 aa).

This sequence belongs to the thymidine/pyrimidine-nucleoside phosphorylase family. As to quaternary structure, homodimer.

It carries out the reaction thymidine + phosphate = 2-deoxy-alpha-D-ribose 1-phosphate + thymine. It participates in pyrimidine metabolism; dTMP biosynthesis via salvage pathway; dTMP from thymine: step 1/2. Its function is as follows. The enzymes which catalyze the reversible phosphorolysis of pyrimidine nucleosides are involved in the degradation of these compounds and in their utilization as carbon and energy sources, or in the rescue of pyrimidine bases for nucleotide synthesis. This chain is Thymidine phosphorylase, found in Aeromonas salmonicida (strain A449).